A 181-amino-acid polypeptide reads, in one-letter code: ATP synthase subunit delta (181 aa).

Belongs to the ATPase delta chain family. In terms of assembly, F-type ATPases have 2 components, F(1) - the catalytic core - and F(0) - the membrane proton channel. F(1) has five subunits: alpha(3), beta(3), gamma(1), delta(1), epsilon(1). F(0) has three main subunits: a(1), b(2) and c(10-14). The alpha and beta chains form an alternating ring which encloses part of the gamma chain. F(1) is attached to F(0) by a central stalk formed by the gamma and epsilon chains, while a peripheral stalk is formed by the delta and b chains.

The protein localises to the cell inner membrane. In terms of biological role, f(1)F(0) ATP synthase produces ATP from ADP in the presence of a proton or sodium gradient. F-type ATPases consist of two structural domains, F(1) containing the extramembraneous catalytic core and F(0) containing the membrane proton channel, linked together by a central stalk and a peripheral stalk. During catalysis, ATP synthesis in the catalytic domain of F(1) is coupled via a rotary mechanism of the central stalk subunits to proton translocation. This protein is part of the stalk that links CF(0) to CF(1). It either transmits conformational changes from CF(0) to CF(1) or is implicated in proton conduction. This Cupriavidus taiwanensis (strain DSM 17343 / BCRC 17206 / CCUG 44338 / CIP 107171 / LMG 19424 / R1) (Ralstonia taiwanensis (strain LMG 19424)) protein is ATP synthase subunit delta.